Consider the following 643-residue polypeptide: MVDAAGFESVAQCPRELHQMMAAAADGLGSIALDTTQLNMSVTDPTAWATAMNNLGMVPVGLPGQQLVSDSICVPGFDPGLNMMTGITPINPMIPGLGLVPPPPPTEVAVVKEIIHCKSCTLFPQNPNLPPPSTRERPPGCKTVFVGGLPENATEEIIQEVFEQCGDITAIRKSKKNFCHIRFAEEFMVDKAIYLSGYRMRLGSSTDKKDSGRLHVDFAQARDDFYEWECKQRMRAREERHRRKLEEDRLRPPSPPAIMHYSEHEAALLADKLKDDSKFSEAITVLLSWIERGEVNRRSANQFYSMVQSANSHVRRLMNEKATHEQEMEEAKENFKNALTGILTQFEQIVAVFNASTRQKAWDHFSKAQRKNIDIWRKHSEELRNAQSEQLMGIRREEEMEMSDDENCDSPTKKMRVDESALAAQAYALKEENDSLRWQLDAYRNEVELLKQEKEQLFRTEENLTKDQQLQFLQQTMQGMQQQLLAIQEELNNKKSELEQAKEEQSHTQALLKVLQEQLKGTKDLVETNGHSHEDANEINVLTVALVNQDRENNTEKRSQGLKSEKEALLIGIISTFLHVHPFGANIEYLWSYMQQLDSKISANEIEMLLMRLPRMFKQEFTGVGATLEKRWKLCAFEGIKTT.

One can recognise an RRM domain in the interval 142 to 221 (KTVFVGGLPE…GRLHVDFAQA (80 aa)). Coiled coils occupy residues 307 to 342 (VQSA…LTGI) and 425 to 521 (QAYA…QLKG).

The protein belongs to the ENOX family. Cu cation serves as cofactor.

The protein localises to the cell membrane. The protein resides in the secreted. It localises to the extracellular space. Not inhibited by the antitumor sulfonylurea LY181984, the vabilloid capsaicin, and retinoids. Probably acts as a terminal oxidase of plasma electron transport from cytosolic NAD(P)H via hydroquinones to acceptors at the cell surface. Hydroquinone oxidase activity alternates with a protein disulfide-thiol interchange/oxidoreductase activity which may control physical membrane displacements associated with vesicle budding or cell enlargement. The activities oscillate with a period length of 24 minutes and play a role in control of the ultradian cellular biological clock. The chain is Ecto-NOX disulfide-thiol exchanger 1 (Enox1) from Mus musculus (Mouse).